A 509-amino-acid polypeptide reads, in one-letter code: tRNA-2-methylthio-N(6)-dimethylallyladenosine synthase (509 aa).

A disordered region spans residues 1-21 (MNEKQKLESGQVHPSDKKSEK). The region spanning 66–184 (RKFYIRTYGC…LPELLSEAYL (119 aa)) is the MTTase N-terminal domain. Cysteine 75, cysteine 111, cysteine 145, cysteine 221, cysteine 225, and cysteine 228 together coordinate [4Fe-4S] cluster. Residues 207–437 (RNGKIKGWVN…NALVNEISAK (231 aa)) enclose the Radical SAM core domain. Positions 440 to 503 (KEYEGKVVEV…TWSLDGEMVG (64 aa)) constitute a TRAM domain.

Belongs to the methylthiotransferase family. MiaB subfamily. In terms of assembly, monomer. [4Fe-4S] cluster serves as cofactor.

The protein resides in the cytoplasm. It carries out the reaction N(6)-dimethylallyladenosine(37) in tRNA + (sulfur carrier)-SH + AH2 + 2 S-adenosyl-L-methionine = 2-methylsulfanyl-N(6)-dimethylallyladenosine(37) in tRNA + (sulfur carrier)-H + 5'-deoxyadenosine + L-methionine + A + S-adenosyl-L-homocysteine + 2 H(+). The catalysed reaction is N(6)-dimethylallyladenosine(37) in tRNA + (sulfur carrier)-SH + AH2 + S-adenosyl-L-methionine = 2-thio-N(6)-dimethylallyladenosine(37) in tRNA + (sulfur carrier)-H + 5'-deoxyadenosine + L-methionine + A + H(+). It catalyses the reaction 2-thio-N(6)-dimethylallyladenosine(37) in tRNA + S-adenosyl-L-methionine = 2-methylsulfanyl-N(6)-dimethylallyladenosine(37) in tRNA + S-adenosyl-L-homocysteine + H(+). In terms of biological role, catalyzes the methylthiolation of N6-(dimethylallyl)adenosine (i(6)A), leading to the formation of 2-methylthio-N6-(dimethylallyl)adenosine (ms(2)i(6)A) at position 37 in tRNAs that read codons beginning with uridine. This is tRNA-2-methylthio-N(6)-dimethylallyladenosine synthase from Bacillus subtilis (strain 168).